Here is a 131-residue protein sequence, read N- to C-terminus: Small ribosomal subunit protein uS11 (131 aa).

This sequence belongs to the universal ribosomal protein uS11 family. In terms of assembly, part of the 30S ribosomal subunit. Interacts with proteins S7 and S18. Binds to IF-3.

Its function is as follows. Located on the platform of the 30S subunit, it bridges several disparate RNA helices of the 16S rRNA. Forms part of the Shine-Dalgarno cleft in the 70S ribosome. The polypeptide is Small ribosomal subunit protein uS11 (Thermotoga neapolitana (strain ATCC 49049 / DSM 4359 / NBRC 107923 / NS-E)).